The chain runs to 341 residues: Elongation factor Ts (341 aa).

The involved in Mg(2+) ion dislocation from EF-Tu stretch occupies residues 80-83; it reads TDFV.

The protein belongs to the EF-Ts family.

The protein resides in the cytoplasm. Associates with the EF-Tu.GDP complex and induces the exchange of GDP to GTP. It remains bound to the aminoacyl-tRNA.EF-Tu.GTP complex up to the GTP hydrolysis stage on the ribosome. This Lactobacillus acidophilus (strain ATCC 700396 / NCK56 / N2 / NCFM) protein is Elongation factor Ts.